The chain runs to 392 residues: Chaperone protein DnaJ (392 aa).

Residues 2–67 enclose the J domain; sequence DYYDVLGVSK…QKRESYDRYG (66 aa). Residues 149 to 227 form a CR-type zinc finger; it reads GVEKELLVSG…CRGQGRIKDK (79 aa). 8 residues coordinate Zn(2+): Cys-162, Cys-165, Cys-179, Cys-182, Cys-201, Cys-204, Cys-215, and Cys-218. CXXCXGXG motif repeat units follow at residues 162-169, 179-186, 201-208, and 215-222; these read CETCLGSG, CDRCKGSG, CPECGGEG, and CSNCRGQG.

It belongs to the DnaJ family. As to quaternary structure, homodimer. Zn(2+) is required as a cofactor.

It is found in the cytoplasm. In terms of biological role, participates actively in the response to hyperosmotic and heat shock by preventing the aggregation of stress-denatured proteins and by disaggregating proteins, also in an autonomous, DnaK-independent fashion. Unfolded proteins bind initially to DnaJ; upon interaction with the DnaJ-bound protein, DnaK hydrolyzes its bound ATP, resulting in the formation of a stable complex. GrpE releases ADP from DnaK; ATP binding to DnaK triggers the release of the substrate protein, thus completing the reaction cycle. Several rounds of ATP-dependent interactions between DnaJ, DnaK and GrpE are required for fully efficient folding. Also involved, together with DnaK and GrpE, in the DNA replication of plasmids through activation of initiation proteins. This Chlamydia caviae (strain ATCC VR-813 / DSM 19441 / 03DC25 / GPIC) (Chlamydophila caviae) protein is Chaperone protein DnaJ.